A 468-amino-acid chain; its full sequence is Tyrosine-protein phosphatase YopH (468 aa).

The interval 127–194 (ARGHVSSHSH…TVSPYGPEAR (68 aa)) is disordered. The segment covering 130–140 (HVSSHSHSVLH) has biased composition (low complexity). The Tyrosine-protein phosphatase domain maps to 152-461 (SHLDPRTPPL…DVLIKLAEGQ (310 aa)). Residue C403 is the Phosphocysteine intermediate of the active site.

Belongs to the protein-tyrosine phosphatase family. Non-receptor class subfamily. In terms of assembly, monomer.

Its subcellular location is the secreted. The catalysed reaction is O-phospho-L-tyrosyl-[protein] + H2O = L-tyrosyl-[protein] + phosphate. Its function is as follows. Essential virulence determinant. This protein is a protein tyrosine phosphatase. The essential function of YopH in Yersinia pathogenesis is host-protein dephosphorylation. It contributes to the ability of the bacteria to resist phagocytosis by peritoneal macrophages. The protein is Tyrosine-protein phosphatase YopH (yopH) of Yersinia enterocolitica.